The chain runs to 289 residues: MAKQDIEASGPEAGEFSAKDYTDPPPAPLIDADELTKWSLYRAVIAEFIATLLFLYITVATVIGYKHQTDAAASGPDAACGGVGILGIAWAFGGMIFILVYCTAGISGGHINPAVTFGLFLARKVSLVRALLYIIAQCLGAICGVGLVKGFQSAYYVRYGGGANELSDGYSKGTGLAAEIIGTFVLVYTVFSATDPKRSARDSHVPVLAPLPIGFAVFMVHLATIPITGTGINPARSLGAAVIYNKDKAWDDQWIFWVGPLIGAAIAAAYHQYVLRASATKLGSYRSNA.

The interval 1-25 (MAKQDIEASGPEAGEFSAKDYTDPP) is disordered. The next 2 membrane-spanning stretches (helical) occupy residues 43-63 (AVIA…ATVI) and 80-100 (CGGV…FILV). The short motif at 112-114 (NPA) is the NPA 1 element. 3 helical membrane-spanning segments follow: residues 131-151 (LLYI…VKGF), 173-193 (GTGL…VFSA), and 207-227 (VLAP…TIPI). An NPA 2 motif is present at residues 233-235 (NPA). The chain crosses the membrane as a helical span at residues 255–275 (IFWVGPLIGAAIAAAYHQYVL).

Belongs to the MIP/aquaporin (TC 1.A.8) family. PIP (TC 1.A.8.11) subfamily.

The protein localises to the cell membrane. In terms of biological role, aquaporins facilitate the transport of water and small neutral solutes across cell membranes. The sequence is that of Aquaporin PIP2-3 (PIP2-3) from Zea mays (Maize).